The primary structure comprises 279 residues: Large ribosomal subunit protein uL2 (279 aa).

Disordered stretches follow at residues 1-59 and 224-279; these read MGIR…GGHK and VAMN…KNKR. Basic residues-rich tracts occupy residues 50–59 and 269–279; these read TTRHKGGGHK and VRRRRTGKNKR.

It belongs to the universal ribosomal protein uL2 family. As to quaternary structure, part of the 50S ribosomal subunit. Forms a bridge to the 30S subunit in the 70S ribosome.

Functionally, one of the primary rRNA binding proteins. Required for association of the 30S and 50S subunits to form the 70S ribosome, for tRNA binding and peptide bond formation. It has been suggested to have peptidyltransferase activity; this is somewhat controversial. Makes several contacts with the 16S rRNA in the 70S ribosome. In Arthrobacter sp. (strain FB24), this protein is Large ribosomal subunit protein uL2.